The primary structure comprises 168 residues: Small ribosomal subunit protein uS5 (168 aa).

The 64-residue stretch at 11-74 (YSEKVVKIDR…ESAKKHLVKI (64 aa)) folds into the S5 DRBM domain.

The protein belongs to the universal ribosomal protein uS5 family. In terms of assembly, part of the 30S ribosomal subunit. Contacts proteins S4 and S8.

Functionally, with S4 and S12 plays an important role in translational accuracy. Located at the back of the 30S subunit body where it stabilizes the conformation of the head with respect to the body. The polypeptide is Small ribosomal subunit protein uS5 (Leptospira interrogans serogroup Icterohaemorrhagiae serovar copenhageni (strain Fiocruz L1-130)).